We begin with the raw amino-acid sequence, 239 residues long: Ribonuclease 3 (239 aa).

The 126-residue stretch at 12–137 (RLTLEAAIGH…LIAALYLDGG (126 aa)) folds into the RNase III domain. Residue Glu50 participates in Mg(2+) binding. Residue Asp54 is part of the active site. Asp123 and Glu126 together coordinate Mg(2+). Glu126 is an active-site residue. In terms of domain architecture, DRBM spans 162–231 (DAKTELQEWA…ATRILEREGI (70 aa)).

It belongs to the ribonuclease III family. As to quaternary structure, homodimer. Requires Mg(2+) as cofactor.

The protein localises to the cytoplasm. It carries out the reaction Endonucleolytic cleavage to 5'-phosphomonoester.. In terms of biological role, digests double-stranded RNA. Involved in the processing of primary rRNA transcript to yield the immediate precursors to the large and small rRNAs (23S and 16S). Processes some mRNAs, and tRNAs when they are encoded in the rRNA operon. Processes pre-crRNA and tracrRNA of type II CRISPR loci if present in the organism. This is Ribonuclease 3 from Rhizobium rhizogenes (strain K84 / ATCC BAA-868) (Agrobacterium radiobacter).